Here is a 189-residue protein sequence, read N- to C-terminus: Glycerol-3-phosphate acyltransferase (189 aa).

The next 5 helical transmembrane spans lie at 1–21 (MVWLLAILAYLLGSLSFAVLL), 50–70 (KLAILTLLGDVGKGLLPVLVA), 72–92 (WLGLGVMEEAWVGIAAVIGHL), 111–131 (MLLGLYPPAVLLAAAAWLLTF), and 151–171 (LLAWQQPGALLPMTVLTALIV).

It belongs to the PlsY family. In terms of assembly, probably interacts with PlsX.

Its subcellular location is the cell inner membrane. It carries out the reaction an acyl phosphate + sn-glycerol 3-phosphate = a 1-acyl-sn-glycero-3-phosphate + phosphate. The protein operates within lipid metabolism; phospholipid metabolism. Functionally, catalyzes the transfer of an acyl group from acyl-phosphate (acyl-PO(4)) to glycerol-3-phosphate (G3P) to form lysophosphatidic acid (LPA). This enzyme utilizes acyl-phosphate as fatty acyl donor, but not acyl-CoA or acyl-ACP. This chain is Glycerol-3-phosphate acyltransferase, found in Pseudomonas paraeruginosa (strain DSM 24068 / PA7) (Pseudomonas aeruginosa (strain PA7)).